We begin with the raw amino-acid sequence, 150 residues long: Protein E6 (150 aa).

2 zinc fingers span residues 31 to 67 (CVFC…CACC) and 104 to 140 (CYLC…CLHC).

The protein belongs to the papillomaviridae E6 protein family. In terms of assembly, forms homodimers. Interacts with ubiquitin-protein ligase UBE3A/E6-AP; this interaction stimulates UBE3A ubiquitin activity. Interacts with host TP53 and EP300; this interaction inhibits TP53 activity. Interacts with human ZYX.

The protein localises to the host cytoplasm. It is found in the host nucleus. In terms of biological role, plays a major role in the induction and maintenance of cellular transformation. E6 associates with host UBE3A/E6-AP ubiquitin-protein ligase and modulates its activity. Sequesters tumor suppressor TP53 in the host cytoplasm and modulates its activity by interacting with host EP300 that results in the reduction of TP53 acetylation and activation. In turn, apoptosis induced by DNA damage is inhibited. E6 also protects host keratinocytes from apoptosis by mediating the degradation of host BAK1. May also inhibit host immune response. The protein is Protein E6 of Human papillomavirus type 6a.